The sequence spans 203 residues: Mitotic spindle assembly checkpoint protein MAD2A (203 aa).

One can recognise an HORMA domain in the interval 14 to 196 (KGSTEIVTEF…TTIHKVESMV (183 aa)). The segment at 194–203 (SMVAYKISND) is required for assuming the closed conformation and for interaction with cdc20.

It belongs to the MAD2 family. As to quaternary structure, interacts with cdc20.

The protein resides in the nucleus. It is found in the chromosome. Its subcellular location is the centromere. The protein localises to the kinetochore. It localises to the cytoplasm. Component of the spindle-assembly checkpoint that prevents the onset of anaphase until all chromosomes are properly aligned at the metaphase plate. Required for the execution of the mitotic checkpoint which monitors the process of kinetochore-spindle attachment and inhibits the activity of the anaphase promoting complex until all chromosomes are aligned at the metaphase plate. The chain is Mitotic spindle assembly checkpoint protein MAD2A (mad2l1-1) from Dictyostelium discoideum (Social amoeba).